The following is a 213-amino-acid chain: Proteasome subunit beta 1 (213 aa).

The propeptide at 1-18 is removed in mature form; by autocatalysis; sequence MVFIAVFNGVFAMSSLPG. T19 serves as the catalytic Nucleophile.

The protein belongs to the peptidase T1B family. The 20S proteasome core is composed of 14 alpha and 14 beta subunits that assemble into four stacked heptameric rings, resulting in a barrel-shaped structure. The two inner rings, each composed of seven catalytic beta subunits, are sandwiched by two outer rings, each composed of seven alpha subunits. The catalytic chamber with the active sites is on the inside of the barrel. Has a gated structure, the ends of the cylinder being occluded by the N-termini of the alpha-subunits. Is capped at one or both ends by the proteasome regulatory ATPase, PAN.

Its subcellular location is the cytoplasm. It catalyses the reaction Cleavage of peptide bonds with very broad specificity.. The formation of the proteasomal ATPase PAN-20S proteasome complex, via the docking of the C-termini of PAN into the intersubunit pockets in the alpha-rings, triggers opening of the gate for substrate entry. Interconversion between the open-gate and close-gate conformations leads to a dynamic regulation of the 20S proteasome proteolysis activity. Its function is as follows. Component of the proteasome core, a large protease complex with broad specificity involved in protein degradation. The polypeptide is Proteasome subunit beta 1 (Staphylothermus marinus (strain ATCC 43588 / DSM 3639 / JCM 9404 / F1)).